The primary structure comprises 138 residues: Thyrotropin subunit beta (138 aa).

Residues 1 to 20 (MTALFLMSMLFGLTCGQAMS) form the signal peptide. Cystine bridges form between Cys-22/Cys-72, Cys-36/Cys-87, Cys-39/Cys-125, Cys-47/Cys-103, Cys-51/Cys-105, and Cys-108/Cys-115. Asn-43 carries N-linked (GlcNAc...) asparagine glycosylation. Positions 133 to 138 (LVGFSV) are excised as a propeptide.

Belongs to the glycoprotein hormones subunit beta family. In terms of assembly, heterodimer of a common alpha chain and a unique beta chain which confers biological specificity to thyrotropin, lutropin, follitropin and gonadotropin.

It localises to the secreted. In terms of biological role, indispensable for the control of thyroid structure and metabolism. This chain is Thyrotropin subunit beta (TSHB), found in Homo sapiens (Human).